The following is a 514-amino-acid chain: Na(+)/H(+) antiporter NhaB (514 aa).

A run of 12 helical transmembrane segments spans residues 23-43 (LALLVFLIVNPFIFLANPFVA), 63-83 (PLLPGGLLAIEAVIIGMTSAA), 97-117 (LLLMFMVAGIYFMKQLLLFIF), 120-140 (LLLSIRSKMVLSLAFCVAAAF), 144-164 (FLDALTVVAVVISVAVGFYGI), 202-222 (LMMHAGVGTALGGVMTMVGEP), 238-258 (FFLRMSPVTVPVLVCGLLTCM), 303-323 (AVIGVWLVTALALHLAEVGLI), 357-377 (LTVFFSIVAVIIDQHLFAPII), 391-411 (LFYLFNGLLSSISDNVFVGTI), 447-467 (ATPNGQAAFLFLLTSALAPLI), and 475-495 (VWMALPYTIVLTLIGLLCVEF).

This sequence belongs to the NhaB Na(+)/H(+) (TC 2.A.34) antiporter family.

The protein resides in the cell inner membrane. The catalysed reaction is 2 Na(+)(in) + 3 H(+)(out) = 2 Na(+)(out) + 3 H(+)(in). Na(+)/H(+) antiporter that extrudes sodium in exchange for external protons. The sequence is that of Na(+)/H(+) antiporter NhaB from Salmonella agona (strain SL483).